Consider the following 2692-residue polypeptide: Thyroglobulin (2692 aa).

The N-terminal stretch at 1–19 (MALALWVFALLGSACLVSA) is a signal peptide. At Tyr24 the chain carries Iodotyrosine; alternate. Position 24 is a sulfotyrosine; alternate (Tyr24). Tyr24 is subject to Thyroxine; alternate. Tyr24 bears the Triiodothyronine; alternate mark. Thyroglobulin type-1 domains are found at residues 31–92 (LRPC…PVAC), 93–160 (LSFC…PARC), and 161–248 (PGSC…LAGT). 8 disulfide bridges follow: Cys34–Cys52, Cys63–Cys70, Cys72–Cys92, Cys96–Cys120, Cys131–Cys138, Cys140–Cys160, Cys164–Cys183, and Cys194–Cys235. Tyr108 carries the post-translational modification Iodotyrosine. N-linked (GlcNAc...) asparagine glycosylation occurs at Asn110. Tyr149 is modified (iodotyrosine; alternate). Position 149 is a diiodotyrosine; alternate (Tyr149). Residue Asn198 is glycosylated (N-linked (GlcNAc...) asparagine). An iodotyrosine mark is found at Tyr234 and Tyr258. One can recognise a Thyroglobulin type-1 4 domain in the interval 298–358 (PTKCEVERFA…TRRPSEPLSC (61 aa)). 9 disulfides stabilise this stretch: Cys301/Cys319, Cys330/Cys336, Cys338/Cys358, Cys364/Cys621, Cys408/Cys609, Cys632/Cys637, Cys639/Cys659, Cys663/Cys688, and Cys699/Cys704. Asn485, Asn497, and Asn546 each carry an N-linked (GlcNAc...) asparagine glycan. Thyroglobulin type-1 domains lie at 606-659 (SQGC…RPRC), 660-727 (PTAC…PKQC), and 728-923 (PTPC…VPAC). The residue at position 705 (Tyr705) is an Iodotyrosine; alternate. Tyr705 is modified (thyroxine; alternate). At Tyr705 the chain carries Triiodothyronine; alternate. Tyr705 is modified (diiodotyrosine; alternate). Disulfide bonds link Cys706/Cys727, Cys731/Cys764, Cys775/Cys900, Cys902/Cys923, Cys927/Cys1033, Cys1044/Cys1051, Cys1053/Cys1079, Cys1128/Cys1147, Cys1151/Cys1171, Cys1183/Cys1190, Cys1192/Cys1212, Cys1237/Cys1287, and Cys1262/Cys1278. An N-linked (GlcNAc...) asparagine glycan is attached at Asn749. An Iodotyrosine modification is found at Tyr786. Residue Asn855 is glycosylated (N-linked (GlcNAc...) asparagine). Tyr868 bears the Iodotyrosine; alternate mark. Position 868 is a diiodotyrosine; alternate (Tyr868). Diiodotyrosine is present on Tyr885. Residue Asn949 is glycosylated (N-linked (GlcNAc...) asparagine). Iodotyrosine; alternate is present on Tyr994. Tyr994 is subject to Diiodotyrosine; alternate. 3 consecutive Thyroglobulin type-1 domains span residues 1021–1079 (SGPL…PTPC), 1088–1147 (LSAW…SAPC), and 1148–1212 (PGLC…QPAC). Asn1142 carries N-linked (GlcNAc...) asparagine glycosylation. At Tyr1241 the chain carries Iodotyrosine. Tyr1241 carries the post-translational modification Thyroxine. N-linked (GlcNAc...) asparagine glycosylation is found at Asn1296 and Asn1384. 13 cysteine pairs are disulfide-bonded: Cys1372–Cys1392, Cys1395–Cys1406, Cys1409–Cys1423, Cys1426–Cys1443, Cys1447–Cys1456, Cys1476–Cys1498, Cys1535–Cys1559, Cys1539–Cys1545, Cys1571–Cys1594, Cys1656–Cys1681, Cys1660–Cys1666, Cys1665–Cys1766, and Cys1692–Cys1709. Type II repeat units follow at residues 1389–1402 (PLGC…SYFQ), 1403–1419 (EEQC…EQTG), and 1420–1436 (SLAC…TSVG). The residue at position 1400 (Tyr1400) is an Iodotyrosine; alternate. Tyr1400 carries the post-translational modification Diiodotyrosine; alternate. Residues 1444–1498 (VTACQRDEAGLQCDQDGQYRASQRDRASGKAFCVDSEGRRLPWSETQAPLVDAQC) form the Thyroglobulin type-1 11 domain. One copy of the Type IIIA repeat lies at 1535 to 1655 (CLADCARDEA…GASLTEAHLF (121 aa)). The Type IIIB repeat unit spans residues 1656-1823 (CLLACDRDSC…LFSLQQAHLW (168 aa)). An N-linked (GlcNAc...) asparagine glycan is attached at Asn1800. Intrachain disulfides connect Cys1824–Cys1850, Cys1828–Cys1835, Cys1859–Cys1870, Cys1927–Cys1955, Cys1931–Cys1937, Cys1936–Cys2007, Cys1966–Cys1979, Cys2061–Cys2085, Cys2065–Cys2071, and Cys2094–Cys2103. A Type IIIA repeat occupies 1824 to 1926 (CLSRCVQEPS…DKAISSGFFE (103 aa)). The Type IIIB repeat unit spans residues 1927-2060 (CERLCDVDPC…VGDFSAARER (134 aa)). An N-linked (GlcNAc...) asparagine glycan is attached at Asn1944. The stretch at 2061-2118 (CLLECSRHQACLVTTLQTRPGAVRCMFYADTQSCTHSLQAQNCQLLLREEATHIYRKP) is one Type IIIA repeat. Residue Tyr2115 is modified to Iodotyrosine. A cholinesterase-like (ChEL) region spans residues 2119 to 2692 (DIPLPGLGSS…PELASKSYSK (574 aa)). 2 N-linked (GlcNAc...) asparagine glycosylation sites follow: Asn2181 and Asn2226. Residue Tyr2467 is modified to Thyroxine. Tyr2500 carries the post-translational modification Iodotyrosine; alternate. Tyr2500 carries the thyroxine; alternate modification. Tyr2500 is subject to Triiodothyronine; alternate. Tyr2500 is modified (diiodotyrosine; alternate). Iodotyrosine occurs at positions 2514 and 2544. Cys2518 and Cys2642 are joined by a disulfide. Tyr2624 bears the Diiodotyrosine mark. The span at 2658–2671 (EAEDGPLAESEEED) shows a compositional bias: acidic residues. Residues 2658-2692 (EAEDGPLAESEEEDRPGLTEDLLGLPELASKSYSK) are disordered. Tyr2690 is modified (iodotyrosine; alternate). Thyroxine; alternate is present on Tyr2690. Tyr2690 is modified (triiodothyronine; alternate). Tyr2690 is subject to Diiodotyrosine; alternate.

The protein belongs to the type-B carboxylesterase/lipase family. In terms of assembly, monomer. Homodimer (via ChEL region); occurs in the endoplasmic reticulum and is required for export to the Golgi apparatus. Homooligomer; disulfide-linked; stored in this form in the thyroid follicle lumen. Post-translationally, iodinated on tyrosine residues by TPO. There are 4 pairs of iodinated tyrosines used for coupling: acceptor Tyr-24 is coupled to donor Tyr-149 or Tyr-234, acceptor Tyr-2500 is coupled to donor Tyr-2467, acceptor Tyr-2690 in monomer 1 is coupled to donor Tyr-2690 in monomer 2 and acceptor Tyr-1241 in monomer 1 is coupled to donor Tyr-108 in monomer 2. In terms of processing, sulfated tyrosines are desulfated during iodination. Undergoes sequential proteolysis by cathepsins to release thyroxine (T4) and triiodothyronine (T3) hormones. In the thyroid follicle lumen, cross-linked TG (storage form) is solubilized by limited proteolysis mediated by cathepsins CTSB and/or CTSL. Partially cleaved TG is further processed by CTSK/cathepsin K and/or CTSL resulting in the release of T4. Following endocytosis, further processing occurs leading to the release of T3 and more T4 hormones. Expressed in thyroid epithelial cells.

Its subcellular location is the secreted. Acts as a substrate for the production of iodinated thyroid hormones thyroxine (T4) and triiodothyronine (T3). The synthesis of T3 and T4 involves iodination of selected tyrosine residues of TG/thyroglobulin followed by their oxidative coupling. Following TG re-internalization and lysosomal-mediated proteolysis, T3 and T4 are released from the polypeptide backbone leading to their secretion into the bloodstream. One dimer produces 7 thyroid hormone molecules. In Sus scrofa (Pig), this protein is Thyroglobulin.